A 613-amino-acid chain; its full sequence is Dihydroxy-acid dehydratase (613 aa).

D81 provides a ligand contact to Mg(2+). C122 lines the [2Fe-2S] cluster pocket. The Mg(2+) site is built by D123 and K124. Residue K124 is modified to N6-carboxylysine. C193 provides a ligand contact to [2Fe-2S] cluster. E489 contacts Mg(2+). S515 (proton acceptor) is an active-site residue.

The protein belongs to the IlvD/Edd family. Homodimer. [2Fe-2S] cluster serves as cofactor. The cofactor is Mg(2+).

The catalysed reaction is (2R)-2,3-dihydroxy-3-methylbutanoate = 3-methyl-2-oxobutanoate + H2O. It carries out the reaction (2R,3R)-2,3-dihydroxy-3-methylpentanoate = (S)-3-methyl-2-oxopentanoate + H2O. The protein operates within amino-acid biosynthesis; L-isoleucine biosynthesis; L-isoleucine from 2-oxobutanoate: step 3/4. Its pathway is amino-acid biosynthesis; L-valine biosynthesis; L-valine from pyruvate: step 3/4. Its function is as follows. Functions in the biosynthesis of branched-chain amino acids. Catalyzes the dehydration of (2R,3R)-2,3-dihydroxy-3-methylpentanoate (2,3-dihydroxy-3-methylvalerate) into 2-oxo-3-methylpentanoate (2-oxo-3-methylvalerate) and of (2R)-2,3-dihydroxy-3-methylbutanoate (2,3-dihydroxyisovalerate) into 2-oxo-3-methylbutanoate (2-oxoisovalerate), the penultimate precursor to L-isoleucine and L-valine, respectively. This chain is Dihydroxy-acid dehydratase, found in Pseudomonas putida (strain ATCC 47054 / DSM 6125 / CFBP 8728 / NCIMB 11950 / KT2440).